The chain runs to 695 residues: MSPARNTGIPASAADAARRHAELVKEIEEHAYRYYVLDAPTISDAEYDALMRELEEIENAYPELRTPDSPTQKVQGAPAAHFAPVEHLERMLSLDNVFTEGELRAWIARVEKEVGTDAAYLCEPKVDGLAVDLVYEDGVLVRGATRGDGRVGEDVTANIKAIRNVPHRLHRDGNLPALLEVRGEVYFPVADFAELNAGLVAAGKAPFANPRNAAAGSLRQKDPRVTASRPLRLVVHGIGAHQGLAAARQSEAYVALAAWGLPVSERAKVATTTKEILDYIAYYAEHRHDLEHEIDGVVVKVDQFALQRRLGATAKAPRWAVAYKYPPEEVTTKLLDIQVNVGRTGRVTPFAVMEPVRVAGSTVTNATLHNADEIKRKGVLIGDTVVVRKAGDVIPEVVGPVVALRDGSEREFVFPSHCPACGTPLVRENGGVDIRCPNARSCPAQLRERLFHIASRGALDIESLGYEAANALLESKLLADEGDLFLLTPEKLRTVPFFTKKDGELSANAVKLLENLESAKTRPLWRVLVALSIRHVGPTAARALAREFGSIDAIRNASVDELAAVEGVGRVIAESIRDWFAVDWHQEIVAKWSAAGVRMAEEQRSAAKPLAGITVVVTGTLSRWSRDSAIEAIQDAGGRAAGSVSKKTDFVVVGENPGSKYDKARQLGIPILDEEGFATLLTKGPDAARSMAQRP.

Residues 44 to 48 (DAEYD), 93 to 94 (SL), and E123 each bind NAD(+). K125 (N6-AMP-lysine intermediate) is an active-site residue. Positions 146, 184, 300, and 324 each coordinate NAD(+). C418, C421, C436, and C442 together coordinate Zn(2+). Residues 605-694 (SAAKPLAGIT…PDAARSMAQR (90 aa)) form the BRCT domain.

It belongs to the NAD-dependent DNA ligase family. LigA subfamily. Requires Mg(2+) as cofactor. Mn(2+) is required as a cofactor.

It catalyses the reaction NAD(+) + (deoxyribonucleotide)n-3'-hydroxyl + 5'-phospho-(deoxyribonucleotide)m = (deoxyribonucleotide)n+m + AMP + beta-nicotinamide D-nucleotide.. Functionally, DNA ligase that catalyzes the formation of phosphodiester linkages between 5'-phosphoryl and 3'-hydroxyl groups in double-stranded DNA using NAD as a coenzyme and as the energy source for the reaction. It is essential for DNA replication and repair of damaged DNA. This Acidothermus cellulolyticus (strain ATCC 43068 / DSM 8971 / 11B) protein is DNA ligase.